Here is a 277-residue protein sequence, read N- to C-terminus: Shikimate dehydrogenase (NADP(+)) (277 aa).

Shikimate is bound by residues 18 to 20 (SKS) and Thr65. The Proton acceptor role is filled by Lys69. Glu81 lines the NADP(+) pocket. Shikimate-binding residues include Asn90 and Asp106. NADP(+) contacts are provided by residues 130–134 (GAGGA), 154–159 (NRTFSK), and Met217. Tyr219 contributes to the shikimate binding site. Gly241 lines the NADP(+) pocket.

This sequence belongs to the shikimate dehydrogenase family. In terms of assembly, homodimer.

The enzyme catalyses shikimate + NADP(+) = 3-dehydroshikimate + NADPH + H(+). It functions in the pathway metabolic intermediate biosynthesis; chorismate biosynthesis; chorismate from D-erythrose 4-phosphate and phosphoenolpyruvate: step 4/7. Functionally, involved in the biosynthesis of the chorismate, which leads to the biosynthesis of aromatic amino acids. Catalyzes the reversible NADPH linked reduction of 3-dehydroshikimate (DHSA) to yield shikimate (SA). This Vibrio parahaemolyticus serotype O3:K6 (strain RIMD 2210633) protein is Shikimate dehydrogenase (NADP(+)).